Consider the following 88-residue polypeptide: HssA/B-like protein 9 (88 aa).

A compositionally biased stretch (polar residues) spans 1-14 (MSILSALTSISNPM). The tract at residues 1 to 26 (MSILSALTSISNPMKSSKSSVANGGG) is disordered.

This sequence belongs to the hssA/B family.

This Dictyostelium discoideum (Social amoeba) protein is HssA/B-like protein 9 (hssl9).